We begin with the raw amino-acid sequence, 154 residues long: Transcriptional repressor NrdR (154 aa).

A zinc finger spans residues 3–34 (CPFCRHPDSRVIDSRETDEGQAIRRRRSCPEC). Positions 46-136 (LAVVKRSGVT…VYRSFSSADD (91 aa)) constitute an ATP-cone domain.

It belongs to the NrdR family. It depends on Zn(2+) as a cofactor.

In terms of biological role, negatively regulates transcription of bacterial ribonucleotide reductase nrd genes and operons by binding to NrdR-boxes. The sequence is that of Transcriptional repressor NrdR from Mycobacterium bovis (strain ATCC BAA-935 / AF2122/97).